The sequence spans 309 residues: HPr kinase/phosphorylase (309 aa).

Catalysis depends on residues histidine 138 and lysine 159. An ATP-binding site is contributed by 153–160 (GQSGVGKS). A Mg(2+)-binding site is contributed by serine 160. Aspartate 177 serves as the catalytic Proton acceptor; for phosphorylation activity. Proton donor; for dephosphorylation activity. Positions 201-210 (LEIRGLGIIN) are important for the catalytic mechanism of both phosphorylation and dephosphorylation. Glutamate 202 is a Mg(2+) binding site. Arginine 243 is an active-site residue. Residues 264–269 (PVRPGR) form an important for the catalytic mechanism of dephosphorylation region.

It belongs to the HPrK/P family. As to quaternary structure, homohexamer. Requires Mg(2+) as cofactor.

The enzyme catalyses [HPr protein]-L-serine + ATP = [HPr protein]-O-phospho-L-serine + ADP + H(+). The catalysed reaction is [HPr protein]-O-phospho-L-serine + phosphate + H(+) = [HPr protein]-L-serine + diphosphate. In terms of biological role, catalyzes the ATP- as well as the pyrophosphate-dependent phosphorylation of a specific serine residue in HPr, a phosphocarrier protein of the phosphoenolpyruvate-dependent sugar phosphotransferase system (PTS). HprK/P also catalyzes the pyrophosphate-producing, inorganic phosphate-dependent dephosphorylation (phosphorolysis) of seryl-phosphorylated HPr (P-Ser-HPr). The two antagonistic activities of HprK/P are regulated by several intracellular metabolites, which change their concentration in response to the absence or presence of rapidly metabolisable carbon sources (glucose, fructose, etc.) in the growth medium. Also phosphorylates/dephosphorylates the HPr-like catabolite repression protein crh on a specific serine residue. Therefore, by controlling the phosphorylation state of HPr and crh, HPrK/P is a sensor enzyme that plays a major role in the regulation of carbon metabolism and sugar transport: it mediates carbon catabolite repression (CCR), and regulates PTS-catalyzed carbohydrate uptake and inducer exclusion. This chain is HPr kinase/phosphorylase, found in Bacillus cereus (strain AH820).